Reading from the N-terminus, the 265-residue chain is Hydroxyethylthiazole kinase (265 aa).

M44 contacts substrate. K120 and T166 together coordinate ATP. G193 provides a ligand contact to substrate.

Belongs to the Thz kinase family. It depends on Mg(2+) as a cofactor.

It carries out the reaction 5-(2-hydroxyethyl)-4-methylthiazole + ATP = 4-methyl-5-(2-phosphooxyethyl)-thiazole + ADP + H(+). It functions in the pathway cofactor biosynthesis; thiamine diphosphate biosynthesis; 4-methyl-5-(2-phosphoethyl)-thiazole from 5-(2-hydroxyethyl)-4-methylthiazole: step 1/1. In terms of biological role, catalyzes the phosphorylation of the hydroxyl group of 4-methyl-5-beta-hydroxyethylthiazole (THZ). The protein is Hydroxyethylthiazole kinase of Clostridium novyi (strain NT).